Consider the following 765-residue polypeptide: Phosphoribosylformylglycinamidine synthase subunit PurL (765 aa).

The span at 1–13 (MTVSPTSAPTQAI) shows a compositional bias: polar residues. The segment at 1 to 32 (MTVSPTSAPTQAIDTVERAATTPDEPQPFGEL) is disordered. Residue H65 is part of the active site. ATP is bound by residues Y68 and K112. Mg(2+) is bound at residue E114. Substrate is bound by residues 115–118 (SHNH) and R137. The active-site Proton acceptor is the H116. Residue D138 coordinates Mg(2+). Q263 lines the substrate pocket. Residue D291 coordinates Mg(2+). 335 to 337 (ESQ) is a substrate binding site. ATP-binding residues include N523 and G560. N561 contributes to the Mg(2+) binding site. A substrate-binding site is contributed by S563.

It belongs to the FGAMS family. As to quaternary structure, monomer. Part of the FGAM synthase complex composed of 1 PurL, 1 PurQ and 2 PurS subunits.

The protein localises to the cytoplasm. It carries out the reaction N(2)-formyl-N(1)-(5-phospho-beta-D-ribosyl)glycinamide + L-glutamine + ATP + H2O = 2-formamido-N(1)-(5-O-phospho-beta-D-ribosyl)acetamidine + L-glutamate + ADP + phosphate + H(+). The protein operates within purine metabolism; IMP biosynthesis via de novo pathway; 5-amino-1-(5-phospho-D-ribosyl)imidazole from N(2)-formyl-N(1)-(5-phospho-D-ribosyl)glycinamide: step 1/2. Its function is as follows. Part of the phosphoribosylformylglycinamidine synthase complex involved in the purines biosynthetic pathway. Catalyzes the ATP-dependent conversion of formylglycinamide ribonucleotide (FGAR) and glutamine to yield formylglycinamidine ribonucleotide (FGAM) and glutamate. The FGAM synthase complex is composed of three subunits. PurQ produces an ammonia molecule by converting glutamine to glutamate. PurL transfers the ammonia molecule to FGAR to form FGAM in an ATP-dependent manner. PurS interacts with PurQ and PurL and is thought to assist in the transfer of the ammonia molecule from PurQ to PurL. This is Phosphoribosylformylglycinamidine synthase subunit PurL from Mycobacterium avium (strain 104).